The chain runs to 531 residues: SWI/SNF-related matrix-associated actin-dependent regulator of chromatin subfamily D member 2 (531 aa).

Asymmetric dimethylarginine occurs at positions 81 and 104. The residue at position 203 (S203) is a Phosphoserine. Residues 205–226 form a disordered region; the sequence is SKAEGDSAGTAGTPGGTPAGDK. Position 217 is a phosphothreonine (T217). K226 is covalently cross-linked (Glycyl lysine isopeptide (Lys-Gly) (interchain with G-Cter in SUMO2)). The SWIB/MDM2 domain occupies 306–383; sequence HQPPQYKLDP…PMKLAGLLQH (78 aa).

This sequence belongs to the SMARCD family. Component of the multiprotein chromatin-remodeling complexes SWI/SNF: SWI/SNF-A (BAF), SWI/SNF-B (PBAF) and related complexes. The canonical complex contains a catalytic subunit (either SMARCA4/BRG1/BAF190A or SMARCA2/BRM/BAF190B), and at least SMARCE1, ACTL6A/BAF53, SMARCC1/BAF155, SMARCC2/BAF170, and SMARCB1/SNF5/BAF47. Other subunits specific to each of the complexes may also be present permitting several possible combinations developmentally and tissue specific. Component of the BAF complex, which includes at least actin (ACTB), ARID1A/BAF250A, ARID1B/BAF250B, SMARCA2/BRM, SMARCA4/BRG1, ACTL6A/BAF53, ACTL6B/BAF53B, SMARCE1/BAF57, SMARCC1/BAF155, SMARCC2/BAF170, SMARCB1/SNF5/INI1, and one or more SMARCD1/BAF60A, SMARCD2/BAF60B, or SMARCD3/BAF60C. In muscle cells, the BAF complex also contains DPF3. Component of the SWI/SNF-B (PBAF) chromatin remodeling complex, at least composed of SMARCA4/BRG1, SMARCB1/BAF47/SNF5, ACTL6A/BAF53A or ACTL6B/BAF53B, SMARCE1/BAF57, SMARCD1/BAF60A, SMARCD2/BAF60B, perhaps SMARCD3/BAF60C, SMARCC1/BAF155, SMARCC2/BAF170, PBRM1/BAF180, ARID2/BAF200 and actin (ACTB). Interacts with UNKL. Interacts with CEBPE. In terms of processing, ubiquitinated through a signaling process involving RAC1 and the RING finger protein UNKL. Isoform 2 is expressed in the pancreas.

It localises to the nucleus. Its function is as follows. Involved in transcriptional activation and repression of select genes by chromatin remodeling (alteration of DNA-nucleosome topology). Component of SWI/SNF chromatin remodeling complexes that carry out key enzymatic activities, changing chromatin structure by altering DNA-histone contacts within a nucleosome in an ATP-dependent manner. Critical regulator of myeloid differentiation, controlling granulocytopoiesis and the expression of genes involved in neutrophil granule formation. The chain is SWI/SNF-related matrix-associated actin-dependent regulator of chromatin subfamily D member 2 (SMARCD2) from Homo sapiens (Human).